Consider the following 791-residue polypeptide: Putative DNA (cytosine-5)-methyltransferase CMT1 (791 aa).

Residues 37–59 (YQSKKTKLQAPTKKPANKGGKKE) are disordered. The region spanning 79–199 (VLINLNDDVY…VPYLNFTSAD (121 aa)) is the BAH domain. Positions 225 to 768 (KFLLDLYSGC…YAFGMASQGL (544 aa)) constitute an SAM-dependent MTase C5-type domain. Residues 308-333 (VESISELEDEEVEENDDIDEASTGAE) adopt a coiled-coil conformation. In terms of domain architecture, Chromo spans 339–404 (FEVEKFLGIM…DGFKSHLLPL (66 aa)). Cysteine 417 is an active-site residue.

This sequence belongs to the class I-like SAM-binding methyltransferase superfamily. C5-methyltransferase family. In terms of tissue distribution, expressed in flowers. Not detected in leaves, roots, seedlings and plants prior formation of flower buds.

It is found in the nucleus. The enzyme catalyses a 2'-deoxycytidine in DNA + S-adenosyl-L-methionine = a 5-methyl-2'-deoxycytidine in DNA + S-adenosyl-L-homocysteine + H(+). Functionally, may be involved in the CpXpG methylation and in gene silencing. This chain is Putative DNA (cytosine-5)-methyltransferase CMT1 (CMT1), found in Arabidopsis thaliana (Mouse-ear cress).